We begin with the raw amino-acid sequence, 274 residues long: Large ribosomal subunit protein uL2 (274 aa).

Disordered stretches follow at residues 35–60 and 224–274; these read EPQH…GHKH and VMNP…RRKK. Positions 50-60 are enriched in basic residues; sequence TTRHKGGGHKH. A compositionally biased stretch (basic and acidic residues) spans 229 to 246; sequence DHPHGGGEGKTGEGRHAV.

Belongs to the universal ribosomal protein uL2 family. As to quaternary structure, part of the 50S ribosomal subunit. Forms a bridge to the 30S subunit in the 70S ribosome.

Its function is as follows. One of the primary rRNA binding proteins. Required for association of the 30S and 50S subunits to form the 70S ribosome, for tRNA binding and peptide bond formation. It has been suggested to have peptidyltransferase activity; this is somewhat controversial. Makes several contacts with the 16S rRNA in the 70S ribosome. The protein is Large ribosomal subunit protein uL2 of Delftia acidovorans (strain DSM 14801 / SPH-1).